Reading from the N-terminus, the 456-residue chain is Solute carrier family 49 member 4 homolog (456 aa).

The Cytoplasmic portion of the chain corresponds to 1–29 (MGLEWSSPGERQPLLYPGGPRAPRVFGRR). Positions 14–15 (LL) match the Di-leucine motif; mediates lysosomal localization motif. Residues 30–50 (WLVLLLFSLLAFLQGLVWNSW) form a helical membrane-spanning segment. Topologically, residues 51 to 67 (GPIQNSARTAYNFSGLD) are lumenal. An N-linked (GlcNAc...) asparagine glycan is attached at asparagine 62. Residues 68–88 (IALLVLWGPIGFLPCFLFMWL) traverse the membrane as a helical segment. Residues 89–95 (MDNRGLR) are Cytoplasmic-facing. Residues 96–116 (VTVLLTALLMVLGAGLRCVPV) form a helical membrane-spanning segment. The Lumenal segment spans residues 117-131 (QDLAVRRKLIHGGQL). The helical transmembrane segment at 132–152 (LNGFAGPTVMNAAPFLSTTWF) threads the bilayer. Residues 153–162 (SPDERATATA) lie on the Cytoplasmic side of the membrane. A helical transmembrane segment spans residues 163–183 (IASMLSYLGGACAFLVGPLVV). The Lumenal portion of the chain corresponds to 184–207 (PAPNSTSGLLLYSGSVGAIRDRIE). N-linked (GlcNAc...) asparagine glycosylation is present at asparagine 187. The chain crosses the membrane as a helical span at residues 208 to 228 (AVMYAEFGIIFVVFAAILAYF). Residues 229–259 (PSRPPVPPSVAAASRRLSYRTSILRLLSNVR) are Cytoplasmic-facing. The chain crosses the membrane as a helical span at residues 260-280 (FLLIVLAYAIPLGFYAGWSGV). The Lumenal portion of the chain corresponds to 281 to 292 (LDLILTPVHVTQ). Residues 293–313 (VDAGWVGFWSIVGGCVVGIAV) form a helical membrane-spanning segment. The Cytoplasmic portion of the chain corresponds to 314 to 326 (GRFADSIRGVLKP). A helical transmembrane segment spans residues 327–347 (ILLLLFSGAALSSTWFTLTFL). Topologically, residues 348–362 (SNVTHLPLTTATLYT) are lumenal. Asparagine 349 carries N-linked (GlcNAc...) asparagine glycosylation. A helical membrane pass occupies residues 363–383 (SCILIGVFLSGTVPIFFEMFV). Over 384–392 (ETVYPIPEG) the chain is Cytoplasmic. A helical membrane pass occupies residues 393 to 413 (ITCGVVTFLSNLFMGVLLLFL). The Lumenal segment spans residues 414–420 (TLYQTNL). A glycan (N-linked (GlcNAc...) asparagine) is linked at asparagine 419. The chain crosses the membrane as a helical span at residues 421 to 441 (SWLNWCLTGSCFLSLLFIACF). Residues 442-456 (RESYDRLYLDVFVSV) lie on the Cytoplasmic side of the membrane.

Belongs to the major facilitator superfamily.

Its subcellular location is the lysosome membrane. The enzyme catalyses pyridoxine(out) + n H(+)(out) = pyridoxine(in) + n H(+)(in). Its function is as follows. Mediates H(+)-dependent pyridoxine transport. This is Solute carrier family 49 member 4 homolog (slc49a4) from Xenopus tropicalis (Western clawed frog).